The primary structure comprises 297 residues: CASP-like protein 4A2 (297 aa).

A disordered region spans residues 1 to 136 (MKMKRTVSSN…MNGEESATTA (136 aa)). Topologically, residues 1-149 (MKMKRTVSSN…ARRDDLVSVT (149 aa)) are cytoplasmic. The segment covering 8-19 (SSNSEAYSYNES) has biased composition (low complexity). The span at 69 to 83 (LPSPIPPPPPQIPPP) shows a compositional bias: pro residues. Polar residues predominate over residues 93–121 (MNSSLDKSPSSMVVQNSWVREDGQQNTTR). A helical transmembrane segment spans residues 150-170 (ALGFRITEVILCVISFSIMAA). Over 171 to 189 (DKTQGWSGDSYDRYKEYRY) the chain is Extracellular. A helical membrane pass occupies residues 190–210 (CLAVNVIAFVYSAFEACDAAC). At 211–225 (YMAKESYMMNCGFHD) the chain is on the cytoplasmic side. Residues 226–246 (LFVFSMDQLLAYLLMSASSCA) form a helical membrane-spanning segment. The Extracellular portion of the chain corresponds to 247–265 (ATRVDDWVSNWGKDEFTQM). A helical transmembrane segment spans residues 266–286 (ATASIAVSFLAFGAFAVSALI). Residues 287-297 (SSYRLFTHASS) are Cytoplasmic-facing.

This sequence belongs to the Casparian strip membrane proteins (CASP) family. Homodimer and heterodimers.

Its subcellular location is the cell membrane. The protein is CASP-like protein 4A2 of Arabidopsis lyrata subsp. lyrata (Lyre-leaved rock-cress).